The chain runs to 88 residues: UPF0223 protein YktA (88 aa).

The protein belongs to the UPF0223 family.

The sequence is that of UPF0223 protein YktA (yktA) from Bacillus subtilis (strain 168).